Reading from the N-terminus, the 1059-residue chain is Mitogen-activated protein kinase kinase kinase mlk-1 (1059 aa).

The segment at 1 to 66 (MEQASVPSYV…ESSQVSRESP (66 aa)) is disordered. The segment covering 38-48 (DTTTASTSTDS) has biased composition (low complexity). The SH3 domain occupies 69–130 (RASKAFVASY…PSNYAREVTY (62 aa)). The Protein kinase domain occupies 150–454 (TLSDCQIGHG…TLAISFKQYA (305 aa)). ATP is bound by residues 156-164 (IGHGATATV) and K193. The stretch at 199–224 (ASNFRADVVSTDEQLEQLKREANLVN) forms a coiled coil. D297 (proton acceptor) is an active-site residue. The residue at position 355 (S355) is a Phosphoserine; by max-2 and tpa-1. Disordered stretches follow at residues 617-699 (PVVS…QTTR) and 714-808 (RAQS…SSSD). A compositionally biased stretch (polar residues) spans 623–633 (MDDSNTFSTID). Composition is skewed to basic and acidic residues over residues 639-648 (DPNHSKESKK) and 662-674 (NKRD…DERA). The span at 678-689 (SISSRSSSTTSS) shows a compositional bias: low complexity. Polar residues predominate over residues 690-699 (NRLITGQTTR). Residues 749 to 759 (RYVKDLEKDTP) are compositionally biased toward basic and acidic residues. Polar residues-rich tracts occupy residues 774–790 (LDQT…SINN) and 798–808 (SRRTTANSSSD). An NPQY motif motif is present at residues 937-940 (NPQY). Y940 is subject to Phosphotyrosine.

It belongs to the protein kinase superfamily. STE Ser/Thr protein kinase family. MAP kinase kinase kinase subfamily. In terms of assembly, interacts with max-2; the interaction is independent of max-2 and mlk-1 kinase activities. May interact (via NPQY motif when phosphorylated on tyrosine residue) with shc-1 (via PID domain); the interaction may facilitate mek-1 phosphorylation by bringing mlk-1 and mek-1 together. Interacts with svh-2 (via cytoplasmic domain). Interacts with tpa-1. Mg(2+) is required as a cofactor. May be phosphorylated on tyrosine residues by svh-2. In terms of processing, may be ubiquitinated and targeted for proteasomal degradation by E3 ubiquitin ligase rpm-1. Expressed in pharynx, intestine, hypodermis, neurons and body muscles.

It carries out the reaction L-seryl-[protein] + ATP = O-phospho-L-seryl-[protein] + ADP + H(+). The catalysed reaction is L-threonyl-[protein] + ATP = O-phospho-L-threonyl-[protein] + ADP + H(+). Activated by phosphorylation at Ser-355. May be activated by svh-2-mediated phosphorylation. Its function is as follows. Serine/threonine-protein kinase which, by phosphorylating and activating mek-1, plays an important role in the activation of the JNK pathway composed of mlk-1, mek-1 and kgb-1. Involved in the response to environmental stress such as heavy metals. By activating the JNK pathway downstream of tyrosine receptor svh-2, plays a role in axon regeneration after injury. This is Mitogen-activated protein kinase kinase kinase mlk-1 from Caenorhabditis elegans.